The sequence spans 427 residues: 3-phosphoshikimate 1-carboxyvinyltransferase (427 aa).

Residues Lys23, Ser24, and Arg28 each coordinate 3-phosphoshikimate. A phosphoenolpyruvate-binding site is contributed by Lys23. Positions 97 and 125 each coordinate phosphoenolpyruvate. Ser169, Ser170, Gln171, Ser197, Asp313, Asn336, and Lys340 together coordinate 3-phosphoshikimate. Gln171 contacts phosphoenolpyruvate. The active-site Proton acceptor is the Asp313. The phosphoenolpyruvate site is built by Arg344, Arg386, and Lys411.

This sequence belongs to the EPSP synthase family. In terms of assembly, monomer.

The protein resides in the cytoplasm. The enzyme catalyses 3-phosphoshikimate + phosphoenolpyruvate = 5-O-(1-carboxyvinyl)-3-phosphoshikimate + phosphate. Its pathway is metabolic intermediate biosynthesis; chorismate biosynthesis; chorismate from D-erythrose 4-phosphate and phosphoenolpyruvate: step 6/7. In terms of biological role, catalyzes the transfer of the enolpyruvyl moiety of phosphoenolpyruvate (PEP) to the 5-hydroxyl of shikimate-3-phosphate (S3P) to produce enolpyruvyl shikimate-3-phosphate and inorganic phosphate. The polypeptide is 3-phosphoshikimate 1-carboxyvinyltransferase (Yersinia ruckeri).